The sequence spans 196 residues: Ribonuclease HII (196 aa).

Positions 15 to 196 constitute an RNase H type-2 domain; sequence FILAGIDEAG…RLSFTKALYK (182 aa). A divalent metal cation contacts are provided by aspartate 21, glutamate 22, and aspartate 112.

The protein belongs to the RNase HII family. The cofactor is Mn(2+). Requires Mg(2+) as cofactor.

It localises to the cytoplasm. The catalysed reaction is Endonucleolytic cleavage to 5'-phosphomonoester.. Endonuclease that specifically degrades the RNA of RNA-DNA hybrids. This Rickettsia bellii (strain OSU 85-389) protein is Ribonuclease HII.